Consider the following 190-residue polypeptide: Natural killer cells antigen CD94 (190 aa).

The Cytoplasmic portion of the chain corresponds to 1 to 10; the sequence is MAAFRTTAWR. Residues 11–31 traverse the membrane as a helical; Signal-anchor for type II membrane protein segment; it reads LISGVLGVICLVLMAALGVLL. The Extracellular segment spans residues 32 to 190; that stretch reads KNSLTKRSVQ…FRYICKQQLI (159 aa). 4 disulfide bridges follow: cysteine 69-cysteine 81, cysteine 72-cysteine 83, cysteine 100-cysteine 185, and cysteine 163-cysteine 177. Positions 79 to 186 constitute a C-type lectin domain; the sequence is YQCNCYFISN…CEKKFRYICK (108 aa). N-linked (GlcNAc...) asparagine glycosylation is found at asparagine 104 and asparagine 144.

As to quaternary structure, can form disulfide-bonded heterodimer with NKG2 family members KLRC1 and KLRC2. KLRD1-KLRC1 heterodimer interacts with peptide-bound MHC-E-B2M heterotrimeric complex. KLRD1 plays a prominent role in directly interacting with MHC-E. KLRD1-KLRC1 interacts with much higher affinity with peptide-bound MHC-E-B2M than KLRD1-KLRC2. Interacts with the adapter protein TYROBP/DAP12; this interaction is required for cell surface expression and cell activation.

The protein localises to the cell membrane. Immune receptor involved in self-nonself discrimination. In complex with KLRC1 or KLRC2 on cytotoxic and regulatory lymphocyte subsets, recognizes non-classical major histocompatibility (MHC) class Ib molecule MHC-E loaded with self-peptides derived from the signal sequence of classical MHC class Ia and non-classical MHC class Ib molecules. Enables cytotoxic cells to monitor the expression of MHC class I molecules in healthy cells and to tolerate self. Primarily functions as a ligand binding subunit as it lacks the capacity to signal. In terms of biological role, KLRD1-KLRC1 acts as an immune inhibitory receptor. Key inhibitory receptor on natural killer (NK) cells that regulates their activation and effector functions. Dominantly counteracts T cell receptor signaling on a subset of memory/effector CD8-positive T cells as part of an antigen-driven response to avoid autoimmunity. On intraepithelial CD8-positive gamma-delta regulatory T cells triggers TGFB1 secretion, which in turn limits the cytotoxic programming of intraepithelial CD8-positive alpha-beta T cells, distinguishing harmless from pathogenic antigens. In MHC-E-rich tumor microenvironment, acts as an immune inhibitory checkpoint and may contribute to progressive loss of effector functions of NK cells and tumor-specific T cells, a state known as cell exhaustion. Upon MHC-E-peptide binding, transmits intracellular signals through KLRC1 immunoreceptor tyrosine-based inhibition motifs (ITIMs) by recruiting INPP5D/SHIP-1 and INPPL1/SHIP-2 tyrosine phosphatases to ITIMs, and ultimately opposing signals transmitted by activating receptors through dephosphorylation of proximal signaling molecules. Its function is as follows. KLRD1-KLRC2 acts as an immune activating receptor. On cytotoxic lymphocyte subsets recognizes MHC-E loaded with signal sequence-derived peptides from non-classical MHC class Ib MHC-G molecules, likely playing a role in the generation and effector functions of adaptive NK cells and in maternal-fetal tolerance during pregnancy. Regulates the effector functions of terminally differentiated cytotoxic lymphocyte subsets, and in particular may play a role in adaptive NK cell response to viral infection. Upon MHC-E-peptide binding, transmits intracellular signals via the adapter protein TYROBP/DAP12, triggering the phosphorylation of proximal signaling molecules and cell activation. This chain is Natural killer cells antigen CD94 (KLRD1), found in Bos taurus (Bovine).